The sequence spans 262 residues: Acyl-[acyl-carrier-protein]--UDP-N-acetylglucosamine O-acyltransferase (262 aa).

It belongs to the transferase hexapeptide repeat family. LpxA subfamily. In terms of assembly, homotrimer.

Its subcellular location is the cytoplasm. The catalysed reaction is a (3R)-hydroxyacyl-[ACP] + UDP-N-acetyl-alpha-D-glucosamine = a UDP-3-O-[(3R)-3-hydroxyacyl]-N-acetyl-alpha-D-glucosamine + holo-[ACP]. The protein operates within glycolipid biosynthesis; lipid IV(A) biosynthesis; lipid IV(A) from (3R)-3-hydroxytetradecanoyl-[acyl-carrier-protein] and UDP-N-acetyl-alpha-D-glucosamine: step 1/6. Involved in the biosynthesis of lipid A, a phosphorylated glycolipid that anchors the lipopolysaccharide to the outer membrane of the cell. The sequence is that of Acyl-[acyl-carrier-protein]--UDP-N-acetylglucosamine O-acyltransferase from Salmonella dublin (strain CT_02021853).